The sequence spans 345 residues: tRNA N6-adenosine threonylcarbamoyltransferase (345 aa).

Residues His113 and His117 each coordinate Fe cation. Substrate contacts are provided by residues 142–146 (AISGG), Asp175, Gly188, Asp192, and Asn282. Asp310 provides a ligand contact to Fe cation.

Belongs to the KAE1 / TsaD family. It depends on Fe(2+) as a cofactor.

It is found in the cytoplasm. The enzyme catalyses L-threonylcarbamoyladenylate + adenosine(37) in tRNA = N(6)-L-threonylcarbamoyladenosine(37) in tRNA + AMP + H(+). Functionally, required for the formation of a threonylcarbamoyl group on adenosine at position 37 (t(6)A37) in tRNAs that read codons beginning with adenine. Is involved in the transfer of the threonylcarbamoyl moiety of threonylcarbamoyl-AMP (TC-AMP) to the N6 group of A37, together with TsaE and TsaB. TsaD likely plays a direct catalytic role in this reaction. This is tRNA N6-adenosine threonylcarbamoyltransferase from Bdellovibrio bacteriovorus (strain ATCC 15356 / DSM 50701 / NCIMB 9529 / HD100).